Consider the following 727-residue polypeptide: Cyclin-T1 (727 aa).

Residue S117 is modified to Phosphoserine. Positions 253–270 (KRIRNWRACQAAKKTKAD) match the Nuclear localization signal, and interaction with Tat-TAR RNA motif. The segment covering 302–322 (MSTSSTTSTVPSLPTTEESSS) has biased composition (low complexity). The tract at residues 302 to 326 (MSTSSTTSTVPSLPTTEESSSNLSG) is disordered. A Glycyl lysine isopeptide (Lys-Gly) (interchain with G-Cter in SUMO2) cross-link involves residue K343. A coiled-coil region spans residues 386 to 427 (SAKVSLKEYRAKHAEELAAQKRQLENMEANVKSQYAYAAQNL). S390 carries the post-translational modification Phosphoserine. At K392 the chain carries N6-acetyllysine. K417 is covalently cross-linked (Glycyl lysine isopeptide (Lys-Gly) (interchain with G-Cter in SUMO2)). 3 positions are modified to ADP-ribosylserine: S418, S476, and S477. The tract at residues 482–552 (IKMRIKVHAA…RPGDPKHSSQ (71 aa)) is histidine-rich domain (HRD). A Glycyl lysine isopeptide (Lys-Gly) (interchain with G-Cter in SUMO2) cross-link involves residue K483. A compositionally biased stretch (basic and acidic residues) spans 486-508 (IKVHAAPDKHNSIDDSVTKSREH). Disordered stretches follow at residues 486–591 (IKVH…DHPA) and 692–727 (LNPR…PLPK). K487 is subject to N6-(ADP-ribosyl)lysine. An ADP-ribosylhistidine modification is found at H489. Phosphoserine is present on residues S497 and S501. Basic residues predominate over residues 509–532 (KEKHKTHPSNHHHHHNHHSHKHSH). At H532 the chain carries ADP-ribosylhistidine. 3 positions are modified to ADP-ribosylserine: S533, S551, and S554. Position 558 is an ADP-ribosylhistidine (H558). The segment covering 562-572 (SLSSSFSSSSS) has biased composition (low complexity). S565 bears the ADP-ribosylserine mark. S566 bears the Phosphoserine mark. Residues 711–727 (LPPLPSEPPPPLPPLPK) show a composition bias toward pro residues.

The protein belongs to the cyclin family. Cyclin C subfamily. Cyclin-T1 is the predominant cyclin that associates with CDK9 to form a heterodimer called P-TEFb. P-TEFb forms a complex with AFF4/AF5Q31. Component of a complex which is at least composed of HTATSF1/Tat-SF1, P-TEFb complex, RNA pol II, SUPT5H, and NCL/nucleolin. Component of the 7SK snRNP complex at least composed of P-TEFb (composed of CDK9 and CCNT1/cyclin-T1), HEXIM1, HEXIM2, BCDIN3, SART3 proteins and 7SK and U6 snRNAs. Interacts (via central region) with ZMYND8 (via N-terminus); the interaction is direct and the association appears to occur between homodimeric ZMYND8 and the activated form of the P-TEFb complex. Interacts with BRD4, targets chromatin binding. Interacts with JMJD6. Interacts with MDFIC. Interacts with HSF1. Interacts with HTATSF1. Interacts with TBX21. ADP-ribosylation on serine residues by PARP1 in response to DNA damage disrupts the phase separation activity of CCNT1, thereby preventing activation of CDK9.

Its subcellular location is the nucleus. Its function is as follows. Regulatory subunit of the cyclin-dependent kinase pair (CDK9/cyclin-T1) complex, also called positive transcription elongation factor B (P-TEFb), which facilitates the transition from abortive to productive elongation by phosphorylating the CTD (C-terminal domain) of the large subunit of RNA polymerase II (RNA Pol II). Required to activate the protein kinase activity of CDK9: acts by mediating formation of liquid-liquid phase separation (LLPS) that enhances binding of P-TEFb to the CTD of RNA Pol II. The polypeptide is Cyclin-T1 (CCNT1) (Equus caballus (Horse)).